The chain runs to 192 residues: Thymidylate kinase (192 aa).

ATP is bound at residue 7 to 14 (GIDCVGKS).

It belongs to the thymidylate kinase family.

It carries out the reaction dTMP + ATP = dTDP + ADP. Functionally, phosphorylation of dTMP to form dTDP in both de novo and salvage pathways of dTTP synthesis. This is Thymidylate kinase (tmk) from Campylobacter jejuni subsp. jejuni serotype O:2 (strain ATCC 700819 / NCTC 11168).